Consider the following 342-residue polypeptide: Holliday junction branch migration complex subunit RuvB (342 aa).

The tract at residues 1–185 is large ATPase domain (RuvB-L); it reads MTVKPLRDVT…FPIQERLEYY (185 aa). ATP-binding positions include L24, R25, G66, K69, T70, S71, 132–134, R175, Y185, and R222; that span reads EDY. T70 contacts Mg(2+). Residues 186-256 are small ATPAse domain (RuvB-S); that stretch reads GPAELKEIAV…VVDRTLRRLE (71 aa). Residues 259-342 are head domain (RuvB-H); it reads ARGLDAMDRR…RSGGKQGSLV (84 aa). Residues R314 and R319 each contribute to the DNA site.

The protein belongs to the RuvB family. As to quaternary structure, homohexamer. Forms an RuvA(8)-RuvB(12)-Holliday junction (HJ) complex. HJ DNA is sandwiched between 2 RuvA tetramers; dsDNA enters through RuvA and exits via RuvB. An RuvB hexamer assembles on each DNA strand where it exits the tetramer. Each RuvB hexamer is contacted by two RuvA subunits (via domain III) on 2 adjacent RuvB subunits; this complex drives branch migration. In the full resolvosome a probable DNA-RuvA(4)-RuvB(12)-RuvC(2) complex forms which resolves the HJ.

It localises to the cytoplasm. The catalysed reaction is ATP + H2O = ADP + phosphate + H(+). Its function is as follows. The RuvA-RuvB-RuvC complex processes Holliday junction (HJ) DNA during genetic recombination and DNA repair, while the RuvA-RuvB complex plays an important role in the rescue of blocked DNA replication forks via replication fork reversal (RFR). RuvA specifically binds to HJ cruciform DNA, conferring on it an open structure. The RuvB hexamer acts as an ATP-dependent pump, pulling dsDNA into and through the RuvAB complex. RuvB forms 2 homohexamers on either side of HJ DNA bound by 1 or 2 RuvA tetramers; 4 subunits per hexamer contact DNA at a time. Coordinated motions by a converter formed by DNA-disengaged RuvB subunits stimulates ATP hydrolysis and nucleotide exchange. Immobilization of the converter enables RuvB to convert the ATP-contained energy into a lever motion, pulling 2 nucleotides of DNA out of the RuvA tetramer per ATP hydrolyzed, thus driving DNA branch migration. The RuvB motors rotate together with the DNA substrate, which together with the progressing nucleotide cycle form the mechanistic basis for DNA recombination by continuous HJ branch migration. Branch migration allows RuvC to scan DNA until it finds its consensus sequence, where it cleaves and resolves cruciform DNA. This Anaeromyxobacter dehalogenans (strain 2CP-C) protein is Holliday junction branch migration complex subunit RuvB.